The sequence spans 168 residues: Transcription antitermination protein NusB (168 aa).

This sequence belongs to the NusB family.

Functionally, involved in transcription antitermination. Required for transcription of ribosomal RNA (rRNA) genes. Binds specifically to the boxA antiterminator sequence of the ribosomal RNA (rrn) operons. This Deinococcus deserti (strain DSM 17065 / CIP 109153 / LMG 22923 / VCD115) protein is Transcription antitermination protein NusB.